The sequence spans 129 residues: Small ribosomal subunit protein uS11 (129 aa).

The protein belongs to the universal ribosomal protein uS11 family. Part of the 30S ribosomal subunit. Interacts with proteins S7 and S18. Binds to IF-3.

In terms of biological role, located on the platform of the 30S subunit, it bridges several disparate RNA helices of the 16S rRNA. Forms part of the Shine-Dalgarno cleft in the 70S ribosome. This chain is Small ribosomal subunit protein uS11, found in Limosilactobacillus fermentum (strain NBRC 3956 / LMG 18251) (Lactobacillus fermentum).